The primary structure comprises 206 residues: ATP phosphoribosyltransferase (206 aa).

The protein belongs to the ATP phosphoribosyltransferase family. Short subfamily. In terms of assembly, heteromultimer composed of HisG and HisZ subunits.

The protein localises to the cytoplasm. The catalysed reaction is 1-(5-phospho-beta-D-ribosyl)-ATP + diphosphate = 5-phospho-alpha-D-ribose 1-diphosphate + ATP. The protein operates within amino-acid biosynthesis; L-histidine biosynthesis; L-histidine from 5-phospho-alpha-D-ribose 1-diphosphate: step 1/9. Catalyzes the condensation of ATP and 5-phosphoribose 1-diphosphate to form N'-(5'-phosphoribosyl)-ATP (PR-ATP). Has a crucial role in the pathway because the rate of histidine biosynthesis seems to be controlled primarily by regulation of HisG enzymatic activity. This Geobacillus sp. (strain WCH70) protein is ATP phosphoribosyltransferase.